A 553-amino-acid polypeptide reads, in one-letter code: Glutamine--tRNA ligase (553 aa).

Residues 34 to 44 (PEPNGYLHIGH) carry the 'HIGH' region motif. ATP contacts are provided by residues 35–37 (EPN) and 41–47 (HIGHAKS). Positions 68 and 213 each coordinate L-glutamine. ATP-binding positions include Thr232 and 262–263 (RL). The 'KMSKS' region motif lies at 269-273 (LTSKR).

Belongs to the class-I aminoacyl-tRNA synthetase family. Monomer.

The protein resides in the cytoplasm. The enzyme catalyses tRNA(Gln) + L-glutamine + ATP = L-glutaminyl-tRNA(Gln) + AMP + diphosphate. This Psychromonas ingrahamii (strain DSM 17664 / CCUG 51855 / 37) protein is Glutamine--tRNA ligase.